A 124-amino-acid polypeptide reads, in one-letter code: MAITKEDVLEYISNLSVLELSELVKEFEEKFGVSAAPVMVAGGAGAGAAAAAEEKTEFDLVLTDTGAEKIKVIKAVRAITGLGLKEAKDAVEKTPSVLKEGMNKEDAEKAKADLEAAGAKVELK.

Residues 99–124 are disordered; that stretch reads KEGMNKEDAEKAKADLEAAGAKVELK. Positions 101 to 114 are enriched in basic and acidic residues; sequence GMNKEDAEKAKADL. Over residues 115 to 124 the composition is skewed to low complexity; that stretch reads EAAGAKVELK.

It belongs to the bacterial ribosomal protein bL12 family. As to quaternary structure, homodimer. Part of the ribosomal stalk of the 50S ribosomal subunit. Forms a multimeric L10(L12)X complex, where L10 forms an elongated spine to which 2 to 4 L12 dimers bind in a sequential fashion. Binds GTP-bound translation factors.

In terms of biological role, forms part of the ribosomal stalk which helps the ribosome interact with GTP-bound translation factors. Is thus essential for accurate translation. This chain is Large ribosomal subunit protein bL12, found in Campylobacter hominis (strain ATCC BAA-381 / DSM 21671 / CCUG 45161 / LMG 19568 / NCTC 13146 / CH001A).